Here is a 346-residue protein sequence, read N- to C-terminus: Cyclin-dependent kinase 20 (346 aa).

Positions 4-288 (YCILGRIGEG…ASKALLHQYF (285 aa)) constitute a Protein kinase domain. Residues 10-18 (IGEGAHGIV) and K33 contribute to the ATP site. D127 serves as the catalytic Proton acceptor.

It belongs to the protein kinase superfamily. CMGC Ser/Thr protein kinase family. CDC2/CDKX subfamily. Monomer. Interacts with TBC1D32 and MAK.

It is found in the nucleus. It localises to the cytoplasm. The protein localises to the cell projection. The protein resides in the cilium. The enzyme catalyses L-seryl-[protein] + ATP = O-phospho-L-seryl-[protein] + ADP + H(+). It catalyses the reaction L-threonyl-[protein] + ATP = O-phospho-L-threonyl-[protein] + ADP + H(+). In terms of biological role, required for high-level Shh responses in the developing neural tube. Together with TBC1D32, controls the structure of the primary cilium by coordinating assembly of the ciliary membrane and axoneme, allowing GLI2 to be properly activated in response to SHH signaling. Involved in cell growth. Activates CDK2, a kinase involved in the control of the cell cycle, by phosphorylating residue 'Thr-160'. The polypeptide is Cyclin-dependent kinase 20 (CDK20) (Pongo abelii (Sumatran orangutan)).